Consider the following 456-residue polypeptide: MESTVMPGFDRISELPESLISQILLHLPTKASVKTSVLSTRWKNLWLNVPGLDLNCRDFPFQNNNEKLLIDFIDRFLQFNNESRLQKFKVDYSRDKIIKFSDRIGDAISRGIRVLDVESNTYYRDADDCIDYPCIEFMPLNLYSCKTLVSLKLSYSGLEDPGFVYLPCLKFMHLREVRWDSSGTMNLEKLVSGCPVLEELIYLHDDKLVVTRVRSRSLKRFSIPFRHKLSLFRRVTQTFEIDAPGLEYMSLKADHFDRIVVKNLTSLFMIDLDIKFIVGFGWMFDPEDLPKRNEIRDFLTGISSVRHMVISHNTVKALDLYSKVGLIPKFNNLSRVEAAFPSSLLQFLPAFLESFPNLKHLILETECPVEVMEKFELVNVPRCFVSTLEHVEIKGLFDWGEQDMKIASYFLENSAVLKKLILSFMGCPQHYSESDIYEELNKLTKRSPRCQIIIRC.

The F-box domain maps to 9-55; that stretch reads FDRISELPESLISQILLHLPTKASVKTSVLSTRWKNLWLNVPGLDLN. 4 LRR repeats span residues 197-220, 243-266, 302-325, and 355-379; these read LEEL…SLKR, APGL…NLTS, ISSV…SKVG, and FPNL…ELVN. Positions 372–424 constitute an FBD domain; sequence MEKFELVNVPRCFVSTLEHVEIKGLFDWGEQDMKIASYFLENSAVLKKLILSF.

The sequence is that of F-box/FBD/LRR-repeat protein At1g13780 from Arabidopsis thaliana (Mouse-ear cress).